The chain runs to 117 residues: DNA-binding protein VNG_2008H (117 aa).

The segment at 1–59 (MSGNPDDDRLEELRQRKKEQLKQQQQGGDAEREAQQQQAQQAEQQKQAMLKQNLTDGAR) is disordered. The span at 11–21 (EELRQRKKEQL) shows a compositional bias: basic and acidic residues. The span at 35–48 (QQQQAQQAEQQKQA) shows a compositional bias: low complexity.

It belongs to the PDCD5 family.

This chain is DNA-binding protein VNG_2008H, found in Halobacterium salinarum (strain ATCC 700922 / JCM 11081 / NRC-1) (Halobacterium halobium).